Consider the following 191-residue polypeptide: 3-isopropylmalate dehydratase small subunit (191 aa).

Belongs to the LeuD family. LeuD type 1 subfamily. Heterodimer of LeuC and LeuD.

It catalyses the reaction (2R,3S)-3-isopropylmalate = (2S)-2-isopropylmalate. It participates in amino-acid biosynthesis; L-leucine biosynthesis; L-leucine from 3-methyl-2-oxobutanoate: step 2/4. Its function is as follows. Catalyzes the isomerization between 2-isopropylmalate and 3-isopropylmalate, via the formation of 2-isopropylmaleate. This Staphylococcus haemolyticus (strain JCSC1435) protein is 3-isopropylmalate dehydratase small subunit.